The following is a 1441-amino-acid chain: Probable cleavage and polyadenylation specificity factor subunit 1 (1441 aa).

Belongs to the CPSF1 family. In terms of assembly, CPSF is a heterotetramer composed of four distinct subunits 160, 100, 70 and 30 kDa.

It localises to the nucleus. In terms of biological role, CPSF plays a key role in pre-mRNA 3'-end formation, recognizing the AAUAAA signal sequence and interacting with poly(A)polymerase and other factors to bring about cleavage and poly(A) addition. This subunit is involved in the RNA recognition step of the polyadenylation reaction. This Oryza sativa subsp. japonica (Rice) protein is Probable cleavage and polyadenylation specificity factor subunit 1.